Consider the following 194-residue polypeptide: Fe/S biogenesis protein NfuA (194 aa).

Positions 152 and 155 each coordinate [4Fe-4S] cluster.

This sequence belongs to the NfuA family. Homodimer. [4Fe-4S] cluster is required as a cofactor.

Its function is as follows. Involved in iron-sulfur cluster biogenesis. Binds a 4Fe-4S cluster, can transfer this cluster to apoproteins, and thereby intervenes in the maturation of Fe/S proteins. Could also act as a scaffold/chaperone for damaged Fe/S proteins. This chain is Fe/S biogenesis protein NfuA, found in Teredinibacter turnerae (strain ATCC 39867 / T7901).